The sequence spans 427 residues: Trigger factor (427 aa).

Residues 163–248 form the PPIase FKBP-type domain; that stretch reads GDTVILDFEG…LHEIKTKEVP (86 aa).

Belongs to the FKBP-type PPIase family. Tig subfamily.

It is found in the cytoplasm. It catalyses the reaction [protein]-peptidylproline (omega=180) = [protein]-peptidylproline (omega=0). In terms of biological role, involved in protein export. Acts as a chaperone by maintaining the newly synthesized protein in an open conformation. Functions as a peptidyl-prolyl cis-trans isomerase. The polypeptide is Trigger factor (Listeria monocytogenes serotype 4a (strain HCC23)).